Reading from the N-terminus, the 135-residue chain is Large ribosomal subunit protein bL17 (135 aa).

The protein belongs to the bacterial ribosomal protein bL17 family. As to quaternary structure, part of the 50S ribosomal subunit. Contacts protein L32.

This is Large ribosomal subunit protein bL17 from Rhodopseudomonas palustris (strain BisB18).